Consider the following 323-residue polypeptide: MADKQISLPAKLINGGIAGLIGVTCVFPIDLAKTRLQNQQNGQRVYTSMSDCLIKTVRSEGYFGMYRGAAVNLTLVTPEKAIKLAANDFFRHQLSKDGQKLTLLKEMLAGCGAGTCQVIVTTPMEMLKIQLQDAGRIAAQRKILAAQGQLSAQGGAQPSVEAPAAPRPTATQLTRDLLRSRGIAGLYKGLGATLLRDVPFSVVYFPLFANLNQLGRPASEEKSPFYVSFLAGCVAGSAAAVAVNPCDVVKTRLQSLQRGVNEDTYSGILDCARKILRHEGPSAFLKGAYCRALVIAPLFGIAQVVYFLGIAESLLGLLQDPQA.

3 Solcar repeats span residues 6-93, 101-214, and 223-312; these read ISLP…FRHQ, LTLL…LNQL, and SPFY…GIAE. The next 6 helical transmembrane spans lie at 12 to 32, 62 to 82, 107 to 127, 189 to 209, 223 to 243, and 292 to 312; these read LING…IDLA, YFGM…EKAI, MLAG…MEML, GLGA…PLFA, SPFY…AVAV, and ALVI…GIAE.

The protein belongs to the mitochondrial carrier (TC 2.A.29) family. In terms of tissue distribution, expressed at high levels in brain, liver, and pancreas.

It is found in the mitochondrion inner membrane. It catalyses the reaction L-glutamate(in) + H(+)(in) = L-glutamate(out) + H(+)(out). Its function is as follows. Mitochondrial glutamate/H(+) symporter. Responsible for the transport of glutamate from the cytosol into the mitochondrial matrix with the concomitant import of a proton. Plays a role in the control of glucose-stimulated insulin secretion. The sequence is that of Mitochondrial glutamate carrier 1 from Homo sapiens (Human).